A 151-amino-acid chain; its full sequence is Arginine regulator (151 aa).

This sequence belongs to the ArgR family.

It localises to the cytoplasm. The protein operates within amino-acid degradation; L-arginine degradation via ADI pathway. Functionally, regulates the transcription of the arc operon, involved in arginine catabolism. The polypeptide is Arginine regulator (argR1) (Clostridium perfringens (strain 13 / Type A)).